The following is a 144-amino-acid chain: Aspartate carbamoyltransferase regulatory chain (144 aa).

Residues Cys103, Cys108, Cys132, and Cys135 each coordinate Zn(2+).

It belongs to the PyrI family. Contains catalytic and regulatory chains. Zn(2+) serves as cofactor.

Functionally, involved in allosteric regulation of aspartate carbamoyltransferase. This is Aspartate carbamoyltransferase regulatory chain from Clostridium tetani (strain Massachusetts / E88).